Consider the following 293-residue polypeptide: N(1)-aminopropylagmatine ureohydrolase (293 aa).

Mn(2+)-binding residues include His-105, Asp-128, His-130, Asp-132, Asp-210, and Asp-212.

The protein belongs to the arginase family. Mn(2+) is required as a cofactor.

The protein localises to the cytoplasm. It catalyses the reaction N(1)-(3-aminopropyl)agmatine + H2O = urea + spermidine. The protein operates within amine and polyamine biosynthesis; spermidine biosynthesis. In terms of biological role, involved in the biosynthesis of polyamines which are thought to support the growth of thermophilic microorganisms under high-temperature conditions. It seems that long-chain and branched-chain of polyamines effectively stabilize DNA and RNA, respectively. Catalyzes the decarboxylation of N1-(3-aminopropyl)agmatine to yield spermidine and urea. It cannot use agmatine as substrate. The chain is N(1)-aminopropylagmatine ureohydrolase from Thermus thermophilus (strain ATCC 27634 / DSM 579 / HB8).